The following is a 450-amino-acid chain: MPVAGPLDIVSLDGEARGIGRLTNEDGTPGKVVFVEGALPGERVMYRSHRVKPSYEQAGVVNILRQSASRVTPQCKFFGVCGGCSMQHLDSRAQVAIKQRVLEDDLWHLAKLRPDVVFRPIAGPDWGYRYRARLTVRHVAAKGGVLVGFHERKSSYVADMTSCEVLPPHVSALLVPLRELVGRLSIVQRMPQIELAVGQDVTALVLRNLEPITAEDEAELRAFADHHNIQFWLQPKGPDTVYPFYPLDRTLTYTLPEFGITMPFKPTDFTQVNHQINRVLMSRALKLLDAQPGDRLLDLFCGIGNFTLPMATRAREVMGIEGSEALTTRALANAQHNGLHTKTSFACRNLFEVSADDVAALGKFDRWLIDPPREGALAVSKALAELSQSGGDAADLLPKRIIYVSCNPATLARDAGLLVHEAGYRLAGAGVVNMFPHTSHVESMAVFERD.

In terms of domain architecture, TRAM spans 1–62 (MPVAGPLDIV…PSYEQAGVVN (62 aa)). Residues Cys-75, Cys-81, Cys-84, and Cys-163 each contribute to the [4Fe-4S] cluster site. S-adenosyl-L-methionine contacts are provided by Gln-271, Phe-300, Asn-305, Glu-321, Asn-349, and Asp-370. The active-site Nucleophile is the Cys-406.

Belongs to the class I-like SAM-binding methyltransferase superfamily. RNA M5U methyltransferase family. RlmD subfamily.

The enzyme catalyses uridine(1939) in 23S rRNA + S-adenosyl-L-methionine = 5-methyluridine(1939) in 23S rRNA + S-adenosyl-L-homocysteine + H(+). Catalyzes the formation of 5-methyl-uridine at position 1939 (m5U1939) in 23S rRNA. This chain is 23S rRNA (uracil(1939)-C(5))-methyltransferase RlmD, found in Ralstonia pickettii (strain 12J).